The primary structure comprises 246 residues: Probable septum site-determining protein MinC (246 aa).

It belongs to the MinC family. In terms of assembly, interacts with MinD and FtsZ.

Its function is as follows. Cell division inhibitor that blocks the formation of polar Z ring septums. Rapidly oscillates between the poles of the cell to destabilize FtsZ filaments that have formed before they mature into polar Z rings. Prevents FtsZ polymerization. This chain is Probable septum site-determining protein MinC, found in Pseudomonas syringae pv. tomato (strain ATCC BAA-871 / DC3000).